The following is a 70-amino-acid chain: DNA-directed RNA polymerase subunit omega (70 aa).

Belongs to the RNA polymerase subunit omega family. The RNAP catalytic core consists of 2 alpha, 1 beta, 1 beta' and 1 omega subunit. When a sigma factor is associated with the core the holoenzyme is formed, which can initiate transcription.

It catalyses the reaction RNA(n) + a ribonucleoside 5'-triphosphate = RNA(n+1) + diphosphate. Promotes RNA polymerase assembly. Latches the N- and C-terminal regions of the beta' subunit thereby facilitating its interaction with the beta and alpha subunits. The sequence is that of DNA-directed RNA polymerase subunit omega from Thermoanaerobacter sp. (strain X514).